We begin with the raw amino-acid sequence, 346 residues long: Protein RecA (346 aa).

68–75 (GPESSGKT) lines the ATP pocket.

It belongs to the RecA family.

It localises to the cytoplasm. In terms of biological role, can catalyze the hydrolysis of ATP in the presence of single-stranded DNA, the ATP-dependent uptake of single-stranded DNA by duplex DNA, and the ATP-dependent hybridization of homologous single-stranded DNAs. It interacts with LexA causing its activation and leading to its autocatalytic cleavage. The polypeptide is Protein RecA (Heliobacterium modesticaldum (strain ATCC 51547 / Ice1)).